Reading from the N-terminus, the 127-residue chain is Protein ApaG (127 aa).

Residues 3–127 (DADVYAISVE…FVLAIPRTLH (125 aa)) enclose the ApaG domain.

The protein is Protein ApaG of Stenotrophomonas maltophilia (strain K279a).